Reading from the N-terminus, the 286-residue chain is Meteorin-like protein (286 aa).

Residues 1-21 (MLSPFLAYLLSVVLLCRIARS) form the signal peptide. 5 cysteine pairs are disulfide-bonded: Cys-28–Cys-51, Cys-84–Cys-120, Cys-165–Cys-235, Cys-168–Cys-259, and Cys-178–Cys-281.

The protein belongs to the meteorin family.

The protein resides in the secreted. Hormone induced following exercise or cold exposure that promotes energy expenditure. Induced either in the skeletal muscle after exercise or in adipose tissue following cold exposure and is present in the circulation. Able to stimulate energy expenditure associated with the browning of the white fat depots and improves glucose tolerance. This Danio rerio (Zebrafish) protein is Meteorin-like protein (metrnl).